The following is a 483-amino-acid chain: 6-phosphogluconate dehydrogenase, decarboxylating 1 (483 aa).

NADP(+) is bound by residues 11–16, 34–36, 78–80, and Asn-106; these read GLAVMG, NRT, and VKA. Substrate contacts are provided by residues Asn-106 and 132–134; that span reads SGG. Lys-186 acts as the Proton acceptor in catalysis. 189 to 190 contributes to the substrate binding site; it reads HN. Glu-193 functions as the Proton donor in the catalytic mechanism. Substrate is bound by residues Tyr-194, Lys-264, Arg-291, Arg-454, and His-460.

Belongs to the 6-phosphogluconate dehydrogenase family. As to quaternary structure, homodimer.

It localises to the cytoplasm. It carries out the reaction 6-phospho-D-gluconate + NADP(+) = D-ribulose 5-phosphate + CO2 + NADPH. It participates in carbohydrate degradation; pentose phosphate pathway; D-ribulose 5-phosphate from D-glucose 6-phosphate (oxidative stage): step 3/3. Its function is as follows. Catalyzes the oxidative decarboxylation of 6-phosphogluconate to ribulose 5-phosphate and CO(2), with concomitant reduction of NADP to NADPH. The chain is 6-phosphogluconate dehydrogenase, decarboxylating 1 (pgdC) from Spinacia oleracea (Spinach).